Reading from the N-terminus, the 191-residue chain is Prostaglandin-H2 D-isomerase (191 aa).

The signal sequence occupies residues 1 to 24 (MAALHTLWMGLVLLGVLGVLQTQA). Glutamine 25 is modified (pyrrolidone carboxylic acid). Asparagine 51 is a glycosylation site (N-linked (GlcNAc...) asparagine). The active-site Nucleophile is the cysteine 65. Residue asparagine 78 is glycosylated (N-linked (GlcNAc...) asparagine). A disulfide bridge connects residues cysteine 89 and cysteine 186.

It belongs to the calycin superfamily. Lipocalin family. In terms of assembly, monomer.

Its subcellular location is the rough endoplasmic reticulum. The protein localises to the nucleus membrane. The protein resides in the golgi apparatus. It localises to the cytoplasm. It is found in the perinuclear region. Its subcellular location is the secreted. The enzyme catalyses prostaglandin H2 = prostaglandin D2. In terms of biological role, catalyzes the conversion of PGH2 to PGD2, a prostaglandin involved in smooth muscle contraction/relaxation and a potent inhibitor of platelet aggregation. Involved in a variety of CNS functions, such as sedation, NREM sleep and PGE2-induced allodynia, and may have an anti-apoptotic role in oligodendrocytes. Binds small non-substrate lipophilic molecules, including biliverdin, bilirubin, retinal, retinoic acid and thyroid hormone, and may act as a scavenger for harmful hydrophobic molecules and as a secretory retinoid and thyroid hormone transporter. Possibly involved in development and maintenance of the blood-brain, blood-retina, blood-aqueous humor and blood-testis barrier. It is likely to play important roles in both maturation and maintenance of the central nervous system and male reproductive system. Involved in PLA2G3-dependent maturation of mast cells. PLA2G3 is secreted by immature mast cells and acts on nearby fibroblasts upstream to PTDGS to synthesize PGD2, which in turn promotes mast cell maturation and degranulation via PTGDR. The chain is Prostaglandin-H2 D-isomerase (PTGDS) from Ursus arctos (Brown bear).